Here is a 512-residue protein sequence, read N- to C-terminus: Probable anion transporter 3, chloroplastic (512 aa).

Residues 1–44 (MATVGSLKPLHHSSCSSSFPRNPIVNRKALLGFVFDSARKNQIR) constitute a chloroplast transit peptide. 12 helical membrane-spanning segments follow: residues 102 to 124 (VILT…VAVV), 139 to 159 (VVQS…GALV), 167 to 187 (VLAW…WAAA), 191 to 211 (LALL…MPSM), 228 to 248 (VGIS…LTPL), 250 to 270 (LSSI…LLWV), 324 to 344 (WAII…LSWM), 359 to 379 (AAWF…YAGA), 396 to 416 (KIMQ…LNFA), 422 to 442 (AAVF…GFLL), 462 to 482 (AGTL…QWLG), and 486 to 506 (AFLT…LLFA).

This sequence belongs to the major facilitator superfamily. Sodium/anion cotransporter (TC 2.A.1.14) family. In terms of tissue distribution, expressed in roots.

It is found in the plastid. The protein resides in the chloroplast membrane. Functionally, inorganic phosphate and probable anion transporter. In Arabidopsis thaliana (Mouse-ear cress), this protein is Probable anion transporter 3, chloroplastic (ANTR3).